Consider the following 428-residue polypeptide: Gamma-glutamyl phosphate reductase (428 aa).

It belongs to the gamma-glutamyl phosphate reductase family.

Its subcellular location is the cytoplasm. The catalysed reaction is L-glutamate 5-semialdehyde + phosphate + NADP(+) = L-glutamyl 5-phosphate + NADPH + H(+). It functions in the pathway amino-acid biosynthesis; L-proline biosynthesis; L-glutamate 5-semialdehyde from L-glutamate: step 2/2. Its function is as follows. Catalyzes the NADPH-dependent reduction of L-glutamate 5-phosphate into L-glutamate 5-semialdehyde and phosphate. The product spontaneously undergoes cyclization to form 1-pyrroline-5-carboxylate. The chain is Gamma-glutamyl phosphate reductase from Afipia carboxidovorans (strain ATCC 49405 / DSM 1227 / KCTC 32145 / OM5) (Oligotropha carboxidovorans).